Consider the following 322-residue polypeptide: Fructose-1,6-bisphosphatase class 1 (322 aa).

Mg(2+) is bound by residues E84, D103, L105, and D106. Substrate-binding positions include 106–109, N198, and K264; that span reads DGSS. A Mg(2+)-binding site is contributed by E270.

It belongs to the FBPase class 1 family. As to quaternary structure, homotetramer. The cofactor is Mg(2+).

Its subcellular location is the cytoplasm. It catalyses the reaction beta-D-fructose 1,6-bisphosphate + H2O = beta-D-fructose 6-phosphate + phosphate. Its pathway is carbohydrate biosynthesis; gluconeogenesis. The protein is Fructose-1,6-bisphosphatase class 1 of Saccharophagus degradans (strain 2-40 / ATCC 43961 / DSM 17024).